We begin with the raw amino-acid sequence, 416 residues long: Formyl-CoA:oxalate CoA-transferase (416 aa).

CoA-binding positions include 17 to 18 (QS), Arg-38, 72 to 75 (LNTK), 96 to 98 (NFH), His-104, and 137 to 140 (KAYE). Asp-169 serves as the catalytic Nucleophile. 248 to 250 (GGQ) is a substrate binding site. CoA is bound at residue 273 to 275 (QEQ).

This sequence belongs to the CoA-transferase III family. Frc subfamily. As to quaternary structure, homodimer.

The catalysed reaction is formyl-CoA + oxalate = oxalyl-CoA + formate. It functions in the pathway metabolic intermediate degradation; oxalate degradation; CO(2) and formate from oxalate: step 1/2. Involved in the catabolism of oxalate and in the adapatation to low pH via the induction of the oxalate-dependent acid tolerance response (ATR). Catalyzes the transfer of the CoA moiety from formyl-CoA to oxalate. The sequence is that of Formyl-CoA:oxalate CoA-transferase from Shigella boydii serotype 18 (strain CDC 3083-94 / BS512).